The primary structure comprises 968 residues: RNA polymerase-associated protein RapA (968 aa).

Positions 163 to 332 (EVGRRYAPRV…FARLRLLDPD (170 aa)) constitute a Helicase ATP-binding domain. An ATP-binding site is contributed by 176-183 (DEVGLGKT). The short motif at 278-281 (DEAH) is the DEAH box element. Residues 491 to 643 (RVDWLIAFLK…ELTCPSGHVL (153 aa)) enclose the Helicase C-terminal domain.

The protein belongs to the SNF2/RAD54 helicase family. RapA subfamily. Interacts with the RNAP. Has a higher affinity for the core RNAP than for the holoenzyme. Its ATPase activity is stimulated by binding to RNAP.

In terms of biological role, transcription regulator that activates transcription by stimulating RNA polymerase (RNAP) recycling in case of stress conditions such as supercoiled DNA or high salt concentrations. Probably acts by releasing the RNAP, when it is trapped or immobilized on tightly supercoiled DNA. Does not activate transcription on linear DNA. Probably not involved in DNA repair. The sequence is that of RNA polymerase-associated protein RapA from Shewanella sp. (strain W3-18-1).